Reading from the N-terminus, the 91-residue chain is Small ribosomal subunit protein bS20 (91 aa).

Positions 1–21 are enriched in basic and acidic residues; it reads MPLHKSAEKRLRQAARRNERN. Residues 1–24 are disordered; it reads MPLHKSAEKRLRQAARRNERNRAR.

The protein belongs to the bacterial ribosomal protein bS20 family.

Functionally, binds directly to 16S ribosomal RNA. This is Small ribosomal subunit protein bS20 from Chlorobaculum parvum (strain DSM 263 / NCIMB 8327) (Chlorobium vibrioforme subsp. thiosulfatophilum).